The chain runs to 364 residues: DNA replication and repair protein RecF (364 aa).

Position 30 to 37 (30 to 37 (GNNAQGKT)) interacts with ATP.

It belongs to the RecF family.

It is found in the cytoplasm. In terms of biological role, the RecF protein is involved in DNA metabolism; it is required for DNA replication and normal SOS inducibility. RecF binds preferentially to single-stranded, linear DNA. It also seems to bind ATP. This Clostridium botulinum (strain 657 / Type Ba4) protein is DNA replication and repair protein RecF.